Here is a 222-residue protein sequence, read N- to C-terminus: Glutathione S-transferase A4 (222 aa).

Position 1 is an N-acetylmethionine (Met-1). One can recognise a GST N-terminal domain in the interval 3 to 83 (ARPKLHYPNG…YIADKHNLFG (81 aa)). Glutathione is bound by residues Tyr-9, 54 to 55 (QV), and 67 to 68 (QT). One can recognise a GST C-terminal domain in the interval 85 to 208 (NLKERTLIDM…EPGSKKKPPP (124 aa)). Substrate is bound at residue Tyr-212.

This sequence belongs to the GST superfamily. Alpha family. Homodimer. In terms of tissue distribution, expressed at a high level in brain, placenta, and skeletal muscle and much lower in lung and liver.

It is found in the cytoplasm. The enzyme catalyses RX + glutathione = an S-substituted glutathione + a halide anion + H(+). Conjugation of reduced glutathione to a wide number of exogenous and endogenous hydrophobic electrophiles. This isozyme has a high catalytic efficiency with 4-hydroxyalkenals such as 4-hydroxynonenal (4-HNE). The polypeptide is Glutathione S-transferase A4 (GSTA4) (Homo sapiens (Human)).